Consider the following 453-residue polypeptide: Tubulin alpha chain (453 aa).

Position 11 (Q11) interacts with GTP. K40 is subject to N6-acetyllysine. Residues E71, G144, T145, T179, N206, and N228 each contribute to the GTP site. E71 is a Mg(2+) binding site. E254 is an active-site residue.

It belongs to the tubulin family. In terms of assembly, dimer of alpha and beta chains. A typical microtubule is a hollow water-filled tube with an outer diameter of 25 nm and an inner diameter of 15 nM. Alpha-beta heterodimers associate head-to-tail to form protofilaments running lengthwise along the microtubule wall with the beta-tubulin subunit facing the microtubule plus end conferring a structural polarity. Microtubules usually have 13 protofilaments but different protofilament numbers can be found in some organisms and specialized cells. Mg(2+) is required as a cofactor. Undergoes a tyrosination/detyrosination cycle, the cyclic removal and re-addition of a C-terminal tyrosine residue by the enzymes tubulin tyrosine carboxypeptidase (TTCP) and tubulin tyrosine ligase (TTL), respectively. Post-translationally, acetylation of alpha chains at Lys-40 stabilizes microtubules and affects affinity and processivity of microtubule motors. This modification has a role in multiple cellular functions, ranging from cell motility, cell cycle progression or cell differentiation to intracellular trafficking and signaling.

The protein resides in the cytoplasm. It localises to the cytoskeleton. It catalyses the reaction GTP + H2O = GDP + phosphate + H(+). Functionally, tubulin is the major constituent of microtubules, a cylinder consisting of laterally associated linear protofilaments composed of alpha- and beta-tubulin heterodimers. Microtubules grow by the addition of GTP-tubulin dimers to the microtubule end, where a stabilizing cap forms. Below the cap, tubulin dimers are in GDP-bound state, owing to GTPase activity of alpha-tubulin. This is Tubulin alpha chain (TUBA) from Neospora caninum (Coccidian parasite).